A 223-amino-acid chain; its full sequence is MCATLMPEPIIFAIPKGRILDEALPLLARVGIEPAADFFDKKSRALVFGTNQSHISLIRVRAFDVATFVAHGAAQLGIVGSDVVDEFDYSELYAPVDLGIGHCRLSLAGPEGGAPPGLGESHIRVATKYPATTRRWFAAQGIQAECIKLNGAMEIAPKLGLASHIVDLVSTGRTLVENALAEQKIISEVSARLIVNRAAFKLNSAEVPALVERFRQAVGDAAA.

The protein belongs to the ATP phosphoribosyltransferase family. Short subfamily. In terms of assembly, heteromultimer composed of HisG and HisZ subunits.

It localises to the cytoplasm. The catalysed reaction is 1-(5-phospho-beta-D-ribosyl)-ATP + diphosphate = 5-phospho-alpha-D-ribose 1-diphosphate + ATP. It functions in the pathway amino-acid biosynthesis; L-histidine biosynthesis; L-histidine from 5-phospho-alpha-D-ribose 1-diphosphate: step 1/9. Catalyzes the condensation of ATP and 5-phosphoribose 1-diphosphate to form N'-(5'-phosphoribosyl)-ATP (PR-ATP). Has a crucial role in the pathway because the rate of histidine biosynthesis seems to be controlled primarily by regulation of HisG enzymatic activity. The sequence is that of ATP phosphoribosyltransferase from Sphingopyxis alaskensis (strain DSM 13593 / LMG 18877 / RB2256) (Sphingomonas alaskensis).